Reading from the N-terminus, the 243-residue chain is 6-carboxyhexanoate--CoA ligase (243 aa).

Belongs to the BioW family. In terms of assembly, homodimer. Requires Mg(2+) as cofactor.

It catalyses the reaction heptanedioate + ATP + CoA = 6-carboxyhexanoyl-CoA + AMP + diphosphate. It functions in the pathway metabolic intermediate metabolism; pimeloyl-CoA biosynthesis; pimeloyl-CoA from pimelate: step 1/1. Functionally, catalyzes the transformation of pimelate into pimeloyl-CoA with concomitant hydrolysis of ATP to AMP. In Thermocrinis albus (strain DSM 14484 / JCM 11386 / HI 11/12), this protein is 6-carboxyhexanoate--CoA ligase.